The sequence spans 125 residues: Period circadian protein (125 aa).

Positions 1-125 are disordered; that stretch reads EGSGGSGSSG…VTLTESLLNK (125 aa). Tandem repeats lie at residues 30–31, 33–34, and 35–36. Residues 30–84 show a composition bias toward gly residues; sequence GTGGTGTNTGTNTGTGTGTGTGTGTGTGTGTGTGTGTGTGTGTGTGTGKGAGAGT. The tract at residues 30 to 86 is 28 X 2 AA approximate tandem repeats of G-[TA]; sequence GTGGTGTNTGTNTGTGTGTGTGTGTGTGTGTGTGTGTGTGTGTGTGTGKGAGAGTGT. One copy of the 4; approximate repeat lies at 37-38; that stretch reads NT. Repeat unit 5 spans residues 39 to 40; sequence GT. One copy of the 6; approximate repeat lies at 41-42; the sequence is NT. 17 tandem repeats follow at residues 43–44, 45–46, 47–48, 49–50, 51–52, 53–54, 55–56, 57–58, 59–60, 61–62, 63–64, 65–66, 67–68, 69–70, 71–72, 73–74, and 75–76. The stretch at 77-78 is one 24; approximate repeat; the sequence is GK. Repeat copies occupy residues 79-80, 81-82, 83-84, and 85-86. The segment covering 85–112 has biased composition (low complexity); it reads GTATNETAGPGTTTTTTTRSTTTAATAA. A compositionally biased stretch (polar residues) spans 116–125; that stretch reads VTLTESLLNK.

As to quaternary structure, forms a heterodimer with timeless (TIM); the complex then translocates into the nucleus. Post-translationally, phosphorylated with a circadian rhythmicity, probably by the double-time protein (dbt). Phosphorylation could be implicated in the stability of per monomer and in the formation of heterodimer per-tim.

It is found in the nucleus. It localises to the cytoplasm. The protein localises to the perinuclear region. Its function is as follows. Essential for biological clock functions. Determines the period length of circadian and ultradian rhythms; an increase in PER dosage leads to shortened circadian rhythms and a decrease leads to lengthened circadian rhythms. Essential for the circadian rhythmicity of locomotor activity, eclosion behavior, and for the rhythmic component of the male courtship song that originates in the thoracic nervous system. The biological cycle depends on the rhythmic formation and nuclear localization of the TIM-PER complex. Light induces the degradation of TIM, which promotes elimination of PER. Nuclear activity of the heterodimer coordinatively regulates PER and TIM transcription through a negative feedback loop. Behaves as a negative element in circadian transcriptional loop. Does not appear to bind DNA, suggesting indirect transcriptional inhibition. The chain is Period circadian protein (per) from Drosophila ananassae (Fruit fly).